Reading from the N-terminus, the 757-residue chain is MDVNPTLLFLKVPAQNAISTTFPYTGDPPYSHGTGTGYTMDTVNRTHQYSEKGKWTTNTETGAPQLNPIDGPLPEDNEPSGYAQTDCVLEAMAFLEESHPGIFENSCLETMEVVQQTRVDKLTQGRQTYDWTLNRNQPAATALANTIEVFRSNGLTANESGRLIDFLKDVMESMDKEGMEITTHFQRKRRVRDNMTKKMVTQRTIGKKKQRLNKRSYLIRALTLNTMTKDAERGKLKRRAIATPGMQIRGFVYFVETLARSICEKLEQSGLPVGGNEKKAKLANVVRKMMTNSQDTELSFTITGDNTKWNENQNPRMFLAMITYITRNQPEWFRNVLSIAPIMFSNKMARLGKGYMFESKSMKLRTQIPAEMLANIDLKYFNESTRKKIEKIRPLLIDGTASLSPGMMMGMFNMLSTVLGVSILNLGQKRYTKTTYWWDGLQSSDDFALIVNAPNHEGIQAGVDRFYRTCKLVGINMSKKKSYINRTGTFEFTSFFYRYGFVANFSMELPSFGVSGINESADMSIGVTVIKNNMINNDLGPATAQMALQLFIKDYRYTYRCHRGDTQIQTRRSFELKKLWEQTRSKAGLLVSDGGPNLYNIRNLHIPEVCLKWELMDEDYQGRLCNPLNPFVSHKEIESVNNAVVMPAHGPAKSMEYDAVATTHSWIPKRNRSILNTSQRGILEDEQMYQKCCNLFEKFFPSSSYRRPVGISSMVEAMVSRARIDARIDFESGRIKKEEFAEIMKICSTIEELRRQK.

Residues 50 to 82 (SEKGKWTTNTETGAPQLNPIDGPLPEDNEPSGY) are disordered. Over residues 55-64 (WTTNTETGAP) the composition is skewed to polar residues. 2 consecutive short sequence motifs (nuclear localization signal) follow at residues 187-195 (RKRRVRDNM) and 203-216 (RTIG…NKRS). Residues 249–256 (RGFVYFVE) form a promoter-binding site region. A RdRp catalytic domain is found at 286–483 (VRKMMTNSQD…GINMSKKKSY (198 aa)).

The protein belongs to the influenza viruses polymerase PB1 family. In terms of assembly, influenza RNA polymerase is composed of three subunits: PB1, PB2 and PA. Interacts (via N-terminus) with PA (via C-terminus). Interacts (via C-terminus) with PB2 (via N-terminus); this interaction is essential for transcription initiation. Phosphorylated by host PRKCA.

The protein resides in the host nucleus. The protein localises to the host cytoplasm. The enzyme catalyses RNA(n) + a ribonucleoside 5'-triphosphate = RNA(n+1) + diphosphate. Functionally, RNA-dependent RNA polymerase which is responsible for replication and transcription of virus RNA segments. The transcription of viral mRNAs occurs by a unique mechanism called cap-snatching. 5' methylated caps of cellular mRNAs are cleaved after 10-13 nucleotides by PA. In turn, these short capped RNAs are used as primers by PB1 for transcription of viral mRNAs. During virus replication, PB1 initiates RNA synthesis and copy vRNA into complementary RNA (cRNA) which in turn serves as a template for the production of more vRNAs. The sequence is that of RNA-directed RNA polymerase catalytic subunit from Influenza A virus (strain A/Turkey/Minnesota/501/1978 H6N8).